The chain runs to 377 residues: N5-carboxyaminoimidazole ribonucleotide synthase (377 aa).

ATP-binding positions include Arg-93, Lys-133, 138 to 144 (GYDGKGQ), 175 to 178 (EEFV), Glu-183, His-206, and 257 to 258 (NE). In terms of domain architecture, ATP-grasp spans 97–287 (KALLDRAQVA…QFENHLRAVC (191 aa)).

It belongs to the PurK/PurT family. In terms of assembly, homodimer.

It carries out the reaction 5-amino-1-(5-phospho-beta-D-ribosyl)imidazole + hydrogencarbonate + ATP = 5-carboxyamino-1-(5-phospho-D-ribosyl)imidazole + ADP + phosphate + 2 H(+). The protein operates within purine metabolism; IMP biosynthesis via de novo pathway; 5-amino-1-(5-phospho-D-ribosyl)imidazole-4-carboxylate from 5-amino-1-(5-phospho-D-ribosyl)imidazole (N5-CAIR route): step 1/2. Its function is as follows. Catalyzes the ATP-dependent conversion of 5-aminoimidazole ribonucleotide (AIR) and HCO(3)(-) to N5-carboxyaminoimidazole ribonucleotide (N5-CAIR). In Vibrio cholerae serotype O1 (strain ATCC 39315 / El Tor Inaba N16961), this protein is N5-carboxyaminoimidazole ribonucleotide synthase.